Here is a 145-residue protein sequence, read N- to C-terminus: Protein SprT-like (145 aa).

The SprT-like domain maps to 5-140 (DYVREVSLAD…ACGRCHGRLI (136 aa)). Histidine 64 is a Zn(2+) binding site. Glutamate 65 is an active-site residue. Residue histidine 68 participates in Zn(2+) binding.

The protein belongs to the SprT family. The cofactor is Zn(2+).

Its subcellular location is the cytoplasm. The protein is Protein SprT-like of Streptococcus equi subsp. zooepidemicus (strain MGCS10565).